A 247-amino-acid chain; its full sequence is Caffeoyl-CoA O-methyltransferase 1 (247 aa).

A substrate-binding site is contributed by lysine 21. S-adenosyl-L-methionine contacts are provided by residues threonine 63, glutamate 85, 87–88, serine 93, aspartate 111, and alanine 140; that span reads GV. A substrate-binding site is contributed by aspartate 163. Aspartate 163 serves as a coordination point for a divalent metal cation. Aspartate 165 is an S-adenosyl-L-methionine binding site. Positions 189 and 190 each coordinate a divalent metal cation. Asparagine 194 contributes to the substrate binding site.

This sequence belongs to the class I-like SAM-binding methyltransferase superfamily. Cation-dependent O-methyltransferase family. CCoAMT subfamily. It depends on a divalent metal cation as a cofactor.

It carries out the reaction (E)-caffeoyl-CoA + S-adenosyl-L-methionine = (E)-feruloyl-CoA + S-adenosyl-L-homocysteine + H(+). It participates in aromatic compound metabolism; phenylpropanoid biosynthesis. Methylates caffeoyl-CoA to feruloyl-CoA and 5-hydroxyferuloyl-CoA to sinapoyl-CoA. Plays a role in the synthesis of feruloylated polysaccharides. Involved in the reinforcement of the plant cell wall. Also involved in the responding to wounding or pathogen challenge by the increased formation of cell wall-bound ferulic acid polymers. The sequence is that of Caffeoyl-CoA O-methyltransferase 1 (CCOAOMT1) from Populus trichocarpa (Western balsam poplar).